The chain runs to 465 residues: Argininosuccinate lyase (465 aa).

This sequence belongs to the lyase 1 family. Argininosuccinate lyase subfamily.

Its subcellular location is the cytoplasm. The catalysed reaction is 2-(N(omega)-L-arginino)succinate = fumarate + L-arginine. Its pathway is amino-acid biosynthesis; L-arginine biosynthesis; L-arginine from L-ornithine and carbamoyl phosphate: step 3/3. This Clostridium botulinum (strain Eklund 17B / Type B) protein is Argininosuccinate lyase.